Here is a 132-residue protein sequence, read N- to C-terminus: Small ribosomal subunit protein uS8 (132 aa).

This sequence belongs to the universal ribosomal protein uS8 family. Part of the 30S ribosomal subunit. Contacts proteins S5 and S12.

Its function is as follows. One of the primary rRNA binding proteins, it binds directly to 16S rRNA central domain where it helps coordinate assembly of the platform of the 30S subunit. This is Small ribosomal subunit protein uS8 from Anaeromyxobacter dehalogenans (strain 2CP-1 / ATCC BAA-258).